Here is a 289-residue protein sequence, read N- to C-terminus: Nodulation protein NolT (289 aa).

The first 33 residues, 1 to 33, serve as a signal peptide directing secretion; the sequence is MFGSAHGDTTSSDTSGRRPLRLVVLPLLLALSS. Cysteine 34 carries N-palmitoyl cysteine lipidation. Cysteine 34 carries the S-diacylglycerol cysteine lipid modification. Residues 233–253 traverse the membrane as a helical segment; it reads VAVGVSAAVFAVTCYLLFIVL.

It belongs to the YscJ lipoprotein family.

The protein resides in the cell outer membrane. This Sinorhizobium fredii (strain NBRC 101917 / NGR234) protein is Nodulation protein NolT (nolT).